The primary structure comprises 446 residues: 3-phosphoshikimate 1-carboxyvinyltransferase (446 aa).

Residues lysine 26, serine 27, and arginine 31 each coordinate 3-phosphoshikimate. Lysine 26 lines the phosphoenolpyruvate pocket. The phosphoenolpyruvate site is built by glycine 100 and arginine 128. Residues serine 171, serine 172, glutamine 173, serine 200, glutamate 315, and histidine 344 each coordinate 3-phosphoshikimate. Glutamine 173 contributes to the phosphoenolpyruvate binding site. Catalysis depends on glutamate 315, which acts as the Proton acceptor. The phosphoenolpyruvate site is built by arginine 348, arginine 389, and lysine 414.

It belongs to the EPSP synthase family. In terms of assembly, monomer.

The protein resides in the cytoplasm. The catalysed reaction is 3-phosphoshikimate + phosphoenolpyruvate = 5-O-(1-carboxyvinyl)-3-phosphoshikimate + phosphate. Its pathway is metabolic intermediate biosynthesis; chorismate biosynthesis; chorismate from D-erythrose 4-phosphate and phosphoenolpyruvate: step 6/7. In terms of biological role, catalyzes the transfer of the enolpyruvyl moiety of phosphoenolpyruvate (PEP) to the 5-hydroxyl of shikimate-3-phosphate (S3P) to produce enolpyruvyl shikimate-3-phosphate and inorganic phosphate. The polypeptide is 3-phosphoshikimate 1-carboxyvinyltransferase (Mycolicibacterium gilvum (strain PYR-GCK) (Mycobacterium gilvum (strain PYR-GCK))).